Reading from the N-terminus, the 189-residue chain is Large ribosomal subunit protein bL9 (189 aa).

The protein belongs to the bacterial ribosomal protein bL9 family.

In terms of biological role, binds to the 23S rRNA. This is Large ribosomal subunit protein bL9 from Cereibacter sphaeroides (strain KD131 / KCTC 12085) (Rhodobacter sphaeroides).